Reading from the N-terminus, the 62-residue chain is uncharacterized protein (62 aa).

A helical membrane pass occupies residues Phe-37–Tyr-57.

It localises to the membrane. This is an uncharacterized protein from Dictyostelium discoideum (Social amoeba).